We begin with the raw amino-acid sequence, 200 residues long: COMM domain-containing protein 7 (200 aa).

The 68-residue stretch at 133-200 (QLIDMEWKFG…RVRTSMECFC (68 aa)) folds into the COMM domain.

This sequence belongs to the COMM domain-containing protein 7 family. In terms of assembly, component of the commander complex consisting of the CCC subcomplex and the retriever subcomplex. Component of the CCC (COMMD/CCDC22/CCDC93) subcomplex consisting of COMMD1, COMMD2, COMMD3, COMMD4, COMMD5, COMMD6, COMMD7, COMMD8, COMMD9, COMMD10, CCDC22 and CCDC93; within the complex forms a heterodimer with COMMD9. Interacts with RELA. Interacts with CCDC22, CCDC93, SCNN1B, CUL7. Widely expressed with highest expression in lung.

The protein resides in the cytoplasmic vesicle. In terms of biological role, scaffold protein in the commander complex that is essential for endosomal recycling of transmembrane cargos; the commander complex is composed of the CCC subcomplex and the retriever subcomplex. May modulate activity of cullin-RING E3 ubiquitin ligase (CRL) complexes. Associates with the NF-kappa-B complex and suppresses its transcriptional activity. This chain is COMM domain-containing protein 7 (COMMD7), found in Homo sapiens (Human).